The chain runs to 164 residues: UPF0304 protein MS2240 (164 aa).

Belongs to the UPF0304 family.

This is UPF0304 protein MS2240 from Mannheimia succiniciproducens (strain KCTC 0769BP / MBEL55E).